A 123-amino-acid chain; its full sequence is Fluoride-specific ion channel FluC (123 aa).

A run of 4 helical transmembrane segments spans residues 1-21 (MLEI…RYLM), 32-52 (ILSL…GLVI), 64-84 (IGLL…SFSY), and 99-119 (FGYT…GIYL). Na(+) contacts are provided by G74 and T77.

It belongs to the fluoride channel Fluc/FEX (TC 1.A.43) family.

Its subcellular location is the cell inner membrane. It carries out the reaction fluoride(in) = fluoride(out). Its activity is regulated as follows. Na(+) is not transported, but it plays an essential structural role and its presence is essential for fluoride channel function. Fluoride-specific ion channel. Important for reducing fluoride concentration in the cell, thus reducing its toxicity. The sequence is that of Fluoride-specific ion channel FluC from Gloeothece citriformis (strain PCC 7424) (Cyanothece sp. (strain PCC 7424)).